Here is a 438-residue protein sequence, read N- to C-terminus: Fibrinogen gamma chain (438 aa).

An N-terminal signal peptide occupies residues 1–25 (MTRLPKQGLLLLQSLALLSSAFGNI). An N-linked (GlcNAc...) asparagine glycan is attached at asparagine 76. The 248-residue stretch at 167 to 414 (QIQEFTGKDC…SVTMKIMPLN (248 aa)) folds into the Fibrinogen C-terminal domain. A disulfide bridge connects residues cysteine 176 and cysteine 205. 3 residues coordinate Ca(2+): aspartate 341, aspartate 343, and glycine 347. A disulfide bridge connects residues cysteine 349 and cysteine 362.

As to quaternary structure, heterohexamer; disulfide linked. Contains 2 sets of 3 non-identical chains (alpha, beta and gamma). The 2 heterotrimers are in head to head conformation with the N-termini in a small central domain. Conversion of fibrinogen to fibrin is triggered by thrombin, which cleaves fibrinopeptides A and B from alpha and beta chains, and thus exposes the N-terminal polymerization sites responsible for the formation of the soft clot. The soft clot is converted into the hard clot by factor XIIIA which catalyzes the epsilon-(gamma-glutamyl)lysine cross-linking between gamma chains (stronger) and between alpha chains (weaker) of different monomers.

Its subcellular location is the secreted. Functionally, together with fibrinogen alpha (FGA) and fibrinogen beta (FGB), polymerizes to form an insoluble fibrin matrix. Has a major function in hemostasis as one of the primary components of blood clots. The chain is Fibrinogen gamma chain (fgg) from Xenopus laevis (African clawed frog).